A 620-amino-acid chain; its full sequence is Probable potassium transport system protein Kup (620 aa).

The next 12 helical transmembrane spans lie at 7–27, 44–64, 98–118, 135–155, 166–186, 201–221, 245–265, 278–298, 335–355, 361–381, 394–414, and 417–437; these read LALA…LYAI, VFGV…LKYL, FFLI…GMIT, PAFH…LFLF, LFGP…LVEI, GIMF…AVFL, WAFL…ALLL, LVPS…TIIA, IYVP…VIGF, LAAA…ILFY, VLNV…GASA, and LFHG…VMMT.

This sequence belongs to the HAK/KUP transporter (TC 2.A.72) family.

It is found in the cell inner membrane. The catalysed reaction is K(+)(in) + H(+)(in) = K(+)(out) + H(+)(out). Its function is as follows. Transport of potassium into the cell. Likely operates as a K(+):H(+) symporter. The sequence is that of Probable potassium transport system protein Kup from Chlorobium chlorochromatii (strain CaD3).